The following is an 81-amino-acid chain: Photosystem I iron-sulfur center (81 aa).

4Fe-4S ferredoxin-type domains follow at residues 2-31 (SHSV…MVPW) and 39-68 (IASS…IRVY). Residues cysteine 11, cysteine 14, cysteine 17, cysteine 21, cysteine 48, cysteine 51, cysteine 54, and cysteine 58 each coordinate [4Fe-4S] cluster.

The cyanobacterial PSI reaction center is composed of one copy each of PsaA,B,C,D,E,F,I,J,K,L,M and X, and forms trimeric complexes. It depends on [4Fe-4S] cluster as a cofactor.

Its subcellular location is the cellular thylakoid membrane. The enzyme catalyses reduced [plastocyanin] + hnu + oxidized [2Fe-2S]-[ferredoxin] = oxidized [plastocyanin] + reduced [2Fe-2S]-[ferredoxin]. Its function is as follows. Apoprotein for the two 4Fe-4S centers FA and FB of photosystem I (PSI); essential for photochemical activity. FB is the terminal electron acceptor of PSI, donating electrons to ferredoxin. The C-terminus interacts with PsaA/B/D and helps assemble the protein into the PSI complex. Required for binding of PsaD and PsaE to PSI. PSI is a plastocyanin/cytochrome c6-ferredoxin oxidoreductase, converting photonic excitation into a charge separation, which transfers an electron from the donor P700 chlorophyll pair to the spectroscopically characterized acceptors A0, A1, FX, FA and FB in turn. Mutant proteins with a 3Fe-4S center are unable to reconstitute PSI activity in vivo. In Synechocystis sp. (strain ATCC 27184 / PCC 6803 / Kazusa), this protein is Photosystem I iron-sulfur center.